Reading from the N-terminus, the 77-residue chain is uncharacterized protein (77 aa).

This is an uncharacterized protein from Dictyostelium discoideum (Social amoeba).